We begin with the raw amino-acid sequence, 162 residues long: Phosphopantetheine adenylyltransferase (162 aa).

Threonine 10 serves as a coordination point for substrate. ATP-binding positions include threonine 10–phenylalanine 11 and histidine 18. Lysine 42, leucine 74, and arginine 88 together coordinate substrate. ATP contacts are provided by residues glycine 89 to arginine 91, glutamate 99, and phenylalanine 124 to threonine 130.

The protein belongs to the bacterial CoaD family. Homohexamer. Mg(2+) serves as cofactor.

Its subcellular location is the cytoplasm. It carries out the reaction (R)-4'-phosphopantetheine + ATP + H(+) = 3'-dephospho-CoA + diphosphate. The protein operates within cofactor biosynthesis; coenzyme A biosynthesis; CoA from (R)-pantothenate: step 4/5. Its function is as follows. Reversibly transfers an adenylyl group from ATP to 4'-phosphopantetheine, yielding dephospho-CoA (dPCoA) and pyrophosphate. In Francisella philomiragia subsp. philomiragia (strain ATCC 25017 / CCUG 19701 / FSC 153 / O#319-036), this protein is Phosphopantetheine adenylyltransferase.